The following is a 424-amino-acid chain: Glutamyl-tRNA reductase (424 aa).

Residues 49 to 52, serine 105, 110 to 112, and glutamine 116 contribute to the substrate site; these read TCNR and EPQ. The active-site Nucleophile is cysteine 50. Residue 185–190 participates in NADP(+) binding; the sequence is GSGETA.

This sequence belongs to the glutamyl-tRNA reductase family. Homodimer.

The enzyme catalyses (S)-4-amino-5-oxopentanoate + tRNA(Glu) + NADP(+) = L-glutamyl-tRNA(Glu) + NADPH + H(+). It functions in the pathway porphyrin-containing compound metabolism; protoporphyrin-IX biosynthesis; 5-aminolevulinate from L-glutamyl-tRNA(Glu): step 1/2. Its function is as follows. Catalyzes the NADPH-dependent reduction of glutamyl-tRNA(Glu) to glutamate 1-semialdehyde (GSA). This Legionella pneumophila (strain Corby) protein is Glutamyl-tRNA reductase.